A 257-amino-acid chain; its full sequence is uncharacterized protein (257 aa).

6 consecutive transmembrane segments (helical) span residues 5 to 25, 29 to 49, 53 to 73, 146 to 166, 180 to 200, and 216 to 236; these read FLYF…IVTF, LALV…GTLI, TLSF…GDWI, LGCI…GIAI, IQFL…WKLW, and VNLC…MIYI.

The protein belongs to the DedA family.

The protein localises to the cell membrane. This is an uncharacterized protein from Buchnera aphidicola subsp. Baizongia pistaciae (strain Bp).